The primary structure comprises 275 residues: uncharacterized protein (275 aa).

The next 3 membrane-spanning stretches (helical) occupy residues 15-35 (LFLP…FLGS), 39-59 (AIMI…FGLF), and 70-90 (ILYL…VVYL). The segment at 140-191 (SSKTDMDSQVAEAPQTEEGEPSVNQVPQEAGASHRVGPYQDQGLATDRNGNP) is disordered.

The protein localises to the mitochondrion membrane. This is an uncharacterized protein from Arabidopsis thaliana (Mouse-ear cress).